Reading from the N-terminus, the 467-residue chain is Neuromedin-K receptor (467 aa).

At 1–86 (MDSFAAAETW…TNQFVQPSWR (86 aa)) the chain is on the extracellular side. Asparagine 23, asparagine 50, and asparagine 75 each carry an N-linked (GlcNAc...) asparagine glycan. Residues 87–109 (IALWSLAYGVVVAVAVFGNLIVI) traverse the membrane as a helical segment. Residues 110 to 119 (WIILAHKRMR) are Cytoplasmic-facing. The helical transmembrane segment at 120–141 (TVTNYFLVNLAFSDASMAAFNT) threads the bilayer. The Extracellular segment spans residues 142–161 (LVNFIYALHSEWYFGANYCR). Cysteine 160 and cysteine 235 form a disulfide bridge. A helical membrane pass occupies residues 162-183 (FQNFFPITAVFASIYSMTAIAV). Over 184–203 (DRYMAIIDPLKPRLSATATK) the chain is Cytoplasmic. Residues 204–224 (IVIGSIWILAFLLALPQCLYS) form a helical membrane-spanning segment. The Extracellular segment spans residues 225-247 (KTKVMPGRTLCYVQWPEGPKQHF). A helical transmembrane segment spans residues 248–272 (IYHIIVIILVYCFPLLIMGITYTIV). Topologically, residues 273–301 (GITLWGGEIPGDTCDKYHEQLKAKRKVVK) are cytoplasmic. Residues 302–323 (MMIIVVVTFAICWLPYHIYFIL) traverse the membrane as a helical segment. Residues 324–336 (TAIYQQLNRWKYI) are Extracellular-facing. The helical transmembrane segment at 337–361 (QQVYLASFWLAMSSTMYNPIIYCCL) threads the bilayer. The Cytoplasmic portion of the chain corresponds to 362–467 (NKRFRAGFKR…SPYTSMEEYS (106 aa)). Cysteine 376 carries the S-palmitoyl cysteine lipid modification. The segment at 416–467 (DPSDADNTRSSRKKRATPGDPNFNGCSRRNSKSASTTSSFISSPYTSMEEYS) is disordered. Residues 447 to 467 (KSASTTSSFISSPYTSMEEYS) show a composition bias toward low complexity.

Belongs to the G-protein coupled receptor 1 family.

The protein resides in the cell membrane. Its function is as follows. This is a receptor for the tachykinin neuropeptide neuromedin-K (neurokinin B). It is associated with G proteins that activate a phosphatidylinositol-calcium second messenger system. This is Neuromedin-K receptor (TACR3) from Oryctolagus cuniculus (Rabbit).